A 462-amino-acid polypeptide reads, in one-letter code: Prenyltransferase phqI (462 aa).

Residue Glu-101 coordinates brevianamide F. Positions 117, 204, 206, 273, 275, 357, 442, and 446 each coordinate dimethylallyl diphosphate.

The protein belongs to the tryptophan dimethylallyltransferase family.

It functions in the pathway alkaloid biosynthesis. Functionally, prenyltransferase; part of the gene cluster that mediates the biosynthesis of paraherquamide, a fungal indole alkaloid that belongs to a family of natural products containing a characteristic bicyclo[2.2.2]diazaoctane core. The first steps in the biosynthesis of paraherquamide is the production of the beta-methyl-proline precursor from L-isoleucine. They require oxidation of a terminally hydroxylated L-isoleucine to the corresponding aldehyde by enzymes which have still to be identified. Spontaneous cyclization and dehydration would yield the 4-methyl pyrolline-5-carboxylic acid, which is then reduced by the pyrroline-5-carboxylate reductase phqD leading to the beta-methyl-proline precursor. The next step of paraherquamide biosynthesis involves coupling of beta-methyl-proline and L-tryptophan by the bimodular NRPS phqB, to produce a monooxopiperazine intermediate. The reductase (R) domain of phqB utilizes NADPH for hydride transfer to reduce the thioester bond of the T domain-tethered linear dipeptide to a hemithioaminal intermediate, which spontaneously cleaves the C-S bond to release the aldehyde product. This compound undergoes spontaneous cyclization and dehydration to give a dienamine which is reverse prenylated at C-2 by the reverse prenyltransferase phqJ. The other prenyltransferase present in the cluster, phqI may be a redundant gene in the pathway. During biosynthetic assembly, the key step to produce the polycyclic core is catalyzed by the bifunctional reductase and intramolecular [4+2] Diels-Alderase, phqE, resulting in formation of the [2.2.2] diazaoctane intermediate preparaherquamide. Following formation of preparaherquamide, an indole 2,3-epoxidation-initiated pinacol-like rearrangement is catalyzed by the phqK FAD-dependent monooxygenase. The prenyltransferase phqA, the cytochrome P450 monooxygenase phqL, and the FAD-linked oxidoreductase phqH (or the cytochrome P450 monooxygenase phqM), are proposed to be involved in the formation of the pyran ring. The FAD-dependent monooxygenase phqK is likely responsible for generation of the spiro-oxindole, and the N-methylation is likely mediated by the phqN methyltransferase leading to the isolable natural product paraherquamide F. However, the order of these biosynthetic steps has still to be determined. In late-stage paraherquamide biosynthesis, the third P450 monooxygenase, phqO, is probably responsible for the C-14 hydroxylation, transforming paraherquamide F to paraherquamide G, and paraherquamide E to the final product paraherquamide A. The expansion from the 6-membered ring pyran (in paraherquamides F and G) to the 7-membered dioxepin ring (in paraherquamides A and E) represents a poorly understood but intriguing process that probably involves the 2-oxoglutarate-dependent dioxygenase phqC. Finally, the remaining members of the paraherquamide cluster, including phqI as well as phqM (or phqH), do not have a clearly prescribed role and appear to be redundant. The polypeptide is Prenyltransferase phqI (Penicillium fellutanum).